Reading from the N-terminus, the 192-residue chain is MAHTLPPLPYALDALAPRISKETLEFHYGKHHQTYVTNLNNLIPGTEFENLSLEEIVKKSSGGVFNNAAQVWNHTFYWNSLSPNGGGEPSGALADAIKAKWGSVDAFKEAFNKSAAGNFGSGWTWLVKKADGTLDIVNTSNAATPLTTADKALLTCDVWEHAYYIDYRNARPKYLENFWALVNWEFAAKNFA.

Residues His27, His74, Asp157, and His161 each contribute to the Fe cation site.

It belongs to the iron/manganese superoxide dismutase family. Homodimer. Requires Fe cation as cofactor.

It carries out the reaction 2 superoxide + 2 H(+) = H2O2 + O2. Functionally, destroys superoxide anion radicals which are normally produced within the cells and which are toxic to biological systems. This chain is Superoxide dismutase [Fe] (sodB), found in Bordetella pertussis (strain Tohama I / ATCC BAA-589 / NCTC 13251).